A 226-amino-acid chain; its full sequence is NifU-like protein 1, chloroplastic (226 aa).

Residues 1-76 constitute a chloroplast transit peptide; it reads MQTTTVPMAA…PVTAVQLPLT (76 aa).

Belongs to the NifU family. In terms of assembly, homodimer; disulfide-linked.

The protein localises to the plastid. It is found in the chloroplast stroma. Molecular scaffold for [Fe-S] cluster assembly of chloroplastic iron-sulfur proteins. The protein is NifU-like protein 1, chloroplastic (NIFU1) of Oryza sativa subsp. japonica (Rice).